Reading from the N-terminus, the 486-residue chain is Palmitoleoyl-protein carboxylesterase notum2 (486 aa).

An N-terminal signal peptide occupies residues 1 to 18 (MRILEIFAILLILKEVRP). N-linked (GlcNAc...) asparagine glycosylation occurs at asparagine 183. Catalysis depends on charge relay system residues serine 223, aspartate 331, and histidine 380.

This sequence belongs to the pectinacetylesterase family. Notum subfamily.

It localises to the secreted. It carries out the reaction [Wnt protein]-O-(9Z)-hexadecenoyl-L-serine + H2O = [Wnt protein]-L-serine + (9Z)-hexadecenoate + H(+). Carboxylesterase that acts as a key negative regulator of the Wnt signaling pathway by specifically mediating depalmitoleoylation of WNT proteins. Serine palmitoleoylation of WNT proteins is required for efficient binding to frizzled receptors. The sequence is that of Palmitoleoyl-protein carboxylesterase notum2 from Xenopus laevis (African clawed frog).